Here is a 427-residue protein sequence, read N- to C-terminus: A-kinase anchor protein 5 (427 aa).

Positions 1 to 122 are disordered; that stretch reads METTISEIHV…DADLSKKKAK (122 aa). Positions 1–170 are essential to the intracellular anchoring function; the sequence is METTISEIHV…LDIQTQTPLN (170 aa). Over residues 8–19 the composition is skewed to basic and acidic residues; it reads IHVENKDEKRSA. Phosphoserine is present on serine 22. Cysteine 36 carries S-palmitoyl cysteine lipidation. Over residues 37 to 48 the composition is skewed to basic residues; that stretch reads FKRRKKAAKALK. The short motif at 76–96 is the AKAP CaM-binding element; sequence RGAWASLKRLVTRRKRSESSK. Basic and acidic residues predominate over residues 92-102; it reads SESSKQQKPLE. Residue cysteine 129 is the site of S-palmitoyl cysteine attachment. Composition is skewed to polar residues over residues 171-182 and 242-252; these read DQATKAKSTQDL and VQPQQASPLET. 3 disordered regions span residues 171–205, 239–269, and 281–333; these read DQAT…STTS, KQDV…PPLP, and SNST…EESK. Positions 302–333 are enriched in basic and acidic residues; that stretch reads EETKPKDTELSQESDFKENGITEEKSKSEESK. Residues 392–405 form a PKA-RII subunit binding domain region; the sequence is LIETASSLVKNAIQ. The tract at residues 410 to 427 is tethers NFATC2 to CRAC channels; it reads QLVNEMASDDNKINNLLQ.

As to quaternary structure, binding protein for dimer of the RII-beta regulatory subunit of cAMP-dependent protein kinase (PKA) and also for the protein kinase C (PKC) and the phosphatase calcineurin (PP2B). Each enzyme is inhibited when bound to the anchoring protein. Also binds the beta2-adrenergic receptor. Part of a complex containing AKAP5, ADCY5, ADCY6 and PDE4C. Interacts with ADCY8, and enhances its phosphorylation at lipid rafts. Interacts with ORAI1 (isoform alpha) (via N-terminus) upon store depletion and in response to LTC4. Does not interact with ORAI2 and ORAI3 paralogs. Interacts (via leucine zipper domain) with NFATC2/NFAT1. Interacts with calmodulin; the interaction is calcium-independent. Interacts with KCNQ2; the interaction may help KCNQ2 channel complex to retain calcium-bound calmodulin. Interacts with KCNK2; the channel is recruited to postsynaptic microdomains by AKAP5 where it can integrate neurotransmitter receptor signals. Part of a complex composed of AKAP5 and ADRB2. Palmitoylated. Palmitoylation at Cys-36 and Cys-129 play a key role in the targeting of AKAP5 to lipid rafts. Palmitoylation by ZDHHC2 is required for AKAP5 function in LTP-stimulated recycling endosome exocytosis. As to expression, predominantly in the cerebral cortex and the postsynaptic densities of the forebrain, and to a lesser extent in adrenal medulla, lung and anterior pituitary.

The protein localises to the postsynaptic recycling endosome membrane. It is found in the cell projection. Its subcellular location is the dendrite. The protein resides in the postsynaptic cell membrane. Functionally, multivalent scaffold protein that anchors the cAMP-dependent protein kinase/PKA to cytoskeletal and/or organelle-associated proteins, targeting the signal carried by cAMP to specific intracellular effectors. Association with the beta2-adrenergic receptor (beta2-AR) not only regulates beta2-AR signaling pathway, but also the activation by PKA by switching off the beta2-AR signaling cascade. Plays a role in long term synaptic potentiation by regulating protein trafficking from the dendritic recycling endosomes to the plasma membrane and controlling both structural and functional plasticity at excitatory synapses. In hippocampal pyramidal neurons, recruits KCNK2/TREK-1 channel at postsynaptic dense bodies microdomains and converts it to a leak channel no longer sensitive to stimulation by arachidonic acid, acidic pH or mechanical stress, nor inhibited by Gq-coupled receptors but still under the negative control of Gs-coupled receptors. Associates with ORAI1 pore-forming subunit of CRAC channels in Ca(2+) signaling microdomains where it recruits NFATC2/NFAT1 and couples store-operated Ca(2+) influx to calmodulin and calcineurin signaling and activation of NFAT-dependent transcriptional responses. The polypeptide is A-kinase anchor protein 5 (AKAP5) (Homo sapiens (Human)).